Consider the following 349-residue polypeptide: Probable ethanolamine kinase (349 aa).

The protein belongs to the choline/ethanolamine kinase family.

Its subcellular location is the cytoplasm. The enzyme catalyses ethanolamine + ATP = phosphoethanolamine + ADP + H(+). It functions in the pathway phospholipid metabolism; phosphatidylethanolamine biosynthesis; phosphatidylethanolamine from ethanolamine: step 1/3. Its function is as follows. Highly specific for ethanolamine phosphorylation. May be a rate-controlling step in phosphatidylethanolamine biosynthesis. This Nematostella vectensis (Starlet sea anemone) protein is Probable ethanolamine kinase (etnk).